The sequence spans 601 residues: NAD(+)--arginine ADP-ribosyltransferase Chelt (601 aa).

Residues 1–18 (MKTIISLIFIMFPLFVSA) form the signal peptide. NAD(+) contacts are provided by residues 26-43 (ADSR…LYPR) and Glu-130. Glu-130 is an active-site residue. Residues Cys-205 and Cys-220 are joined by a disulfide bond.

It belongs to the enterotoxin A family.

It is found in the secreted. The enzyme catalyses L-arginyl-[protein] + NAD(+) = N(omega)-(ADP-D-ribosyl)-L-arginyl-[protein] + nicotinamide + H(+). Its function is as follows. A probable mono(ADP-ribosyl)transferase, it may ADP-ribosylate Arg in target protein(s). Upon expression in yeast cells causes cell death. The protein is NAD(+)--arginine ADP-ribosyltransferase Chelt of Vibrio cholerae.